The sequence spans 397 residues: Sulfate adenylyltransferase (397 aa).

Belongs to the sulfate adenylyltransferase family.

It catalyses the reaction sulfate + ATP + H(+) = adenosine 5'-phosphosulfate + diphosphate. Its pathway is sulfur metabolism; hydrogen sulfide biosynthesis; sulfite from sulfate: step 1/3. This is Sulfate adenylyltransferase (sat) from Allochromatium vinosum (strain ATCC 17899 / DSM 180 / NBRC 103801 / NCIMB 10441 / D) (Chromatium vinosum).